The chain runs to 661 residues: Fructose-1,6-bisphosphatase class 3 (661 aa).

It belongs to the FBPase class 3 family. The cofactor is Mn(2+).

It carries out the reaction beta-D-fructose 1,6-bisphosphate + H2O = beta-D-fructose 6-phosphate + phosphate. It participates in carbohydrate biosynthesis; gluconeogenesis. This Clostridioides difficile (strain 630) (Peptoclostridium difficile) protein is Fructose-1,6-bisphosphatase class 3.